The following is a 180-amino-acid chain: ATP-dependent protease subunit HslV (180 aa).

The active site involves T6. Na(+) is bound by residues A164, C167, and T170.

The protein belongs to the peptidase T1B family. HslV subfamily. A double ring-shaped homohexamer of HslV is capped on each side by a ring-shaped HslU homohexamer. The assembly of the HslU/HslV complex is dependent on binding of ATP.

It is found in the cytoplasm. The catalysed reaction is ATP-dependent cleavage of peptide bonds with broad specificity.. With respect to regulation, allosterically activated by HslU binding. Protease subunit of a proteasome-like degradation complex believed to be a general protein degrading machinery. In Borrelia turicatae (strain 91E135), this protein is ATP-dependent protease subunit HslV.